A 485-amino-acid chain; its full sequence is Programmed cell death protein 7 (485 aa).

Residues 1–133 form a disordered region; that stretch reads MALPPFFGQG…EAPPPPADVL (133 aa). Residues 12-48 are compositionally biased toward pro residues; it reads PGPPPPQPPPPAPFGCPPPPLPSPAFPPPLPQRPGPF. A compositionally biased stretch (low complexity) spans 49–71; the sequence is PGASAPFLQPPLALQPRASAEAS. Pro residues-rich tracts occupy residues 82-96 and 109-130; these read PVPP…PQCR and PPPP…PPPA. Coiled coils occupy residues 232–335 and 362–411; these read VGEA…AAAR and RSEL…ESKL.

As to quaternary structure, interacts with RBM40. Component of the U11/U12 snRNPs that are part of the U12-type spliceosome.

It is found in the nucleus. Promotes apoptosis when overexpressed. This is Programmed cell death protein 7 (PDCD7) from Homo sapiens (Human).